A 454-amino-acid chain; its full sequence is MSDNDTIVAQATPPGRGGVGILRISGFKAREVAETVLGKLPKPRYADYLPFKDADGSVLDQGIALWFPGPNSFTGEDVLELQGHGGPVILDLLLKRILTIPGLRIARPGEFSERAFLYDKLDLAQAEAIADLIDASSEQAARSALNSLQGAFSARVNHLVEALTHLRIYVEAAIDFPDEEIDFLSDGKIEAQLNDVIADLDAVRAEARQGSLLREGMKVVIAGRPNAGKSSLLNALAGREAAIVTDIAGTTRDVLREHIHIDGMPLHIIDTAGLREASDEVERIGIERAWQEIEQADRVLFMVDGTTTDAVDPAEIWPEFIARLPAKLPITVVRNKADITGETLGMSEVNGHALIRLSARTGEGVEVLRNHLKQSMGFDTNMEGGFLARRRHLQALEQAAEHLQQGKAQLLGAWAGELLAEELRLAQQNLSEITGEFTSDDLLGRIFSSFCIGK.

Residues R23, E80, and K120 each contribute to the (6S)-5-formyl-5,6,7,8-tetrahydrofolate site. The TrmE-type G domain occupies 216–377; it reads GMKVVIAGRP…LRNHLKQSMG (162 aa). Position 226 (N226) interacts with K(+). Residues 226-231, 245-251, 270-273, 335-338, and 358-360 contribute to the GTP site; these read NAGKSS, TDIAGTT, DTAG, NKAD, and SAR. S230 contacts Mg(2+). T245, I247, and T250 together coordinate K(+). T251 contributes to the Mg(2+) binding site. K454 provides a ligand contact to (6S)-5-formyl-5,6,7,8-tetrahydrofolate.

It belongs to the TRAFAC class TrmE-Era-EngA-EngB-Septin-like GTPase superfamily. TrmE GTPase family. As to quaternary structure, homodimer. Heterotetramer of two MnmE and two MnmG subunits. K(+) serves as cofactor.

The protein resides in the cytoplasm. In terms of biological role, exhibits a very high intrinsic GTPase hydrolysis rate. Involved in the addition of a carboxymethylaminomethyl (cmnm) group at the wobble position (U34) of certain tRNAs, forming tRNA-cmnm(5)s(2)U34. This Escherichia coli O139:H28 (strain E24377A / ETEC) protein is tRNA modification GTPase MnmE.